The chain runs to 212 residues: Large ribosomal subunit protein uL3 (212 aa).

Residue glutamine 153 is modified to N5-methylglutamine.

This sequence belongs to the universal ribosomal protein uL3 family. Part of the 50S ribosomal subunit. Forms a cluster with proteins L14 and L19. Post-translationally, methylated by PrmB.

Its function is as follows. One of the primary rRNA binding proteins, it binds directly near the 3'-end of the 23S rRNA, where it nucleates assembly of the 50S subunit. The sequence is that of Large ribosomal subunit protein uL3 from Azoarcus sp. (strain BH72).